The chain runs to 261 residues: CD40 ligand (261 aa).

Residues 1–22 (MIETYNQPSPRSAATGLPVRMK) lie on the Cytoplasmic side of the membrane. A helical; Signal-anchor for type II membrane protein membrane pass occupies residues 23–43 (IFMYLLTIFLITQMIGSALFA). Residues 44 to 261 (VYLHRRLDKI…GFTSFGLLKL (218 aa)) lie on the Extracellular side of the membrane. Residues 122-261 (IAAHVISEAS…GFTSFGLLKL (140 aa)) enclose the THD domain. An intrachain disulfide couples C178 to C218. N-linked (GlcNAc...) asparagine glycosylation is present at N240.

The protein belongs to the tumor necrosis factor family. As to quaternary structure, homotrimer. Interacts with CD28. CD40 ligand, soluble form: Exists as either a monomer or a homotrimer. Forms a ternary complex between CD40 and integrins for CD40-CD40LG signaling. Post-translationally, the soluble form derives from the membrane form by proteolytic processing.

It is found in the cell membrane. The protein resides in the cell surface. It localises to the secreted. Functionally, cytokine that acts as a ligand to CD40/TNFRSF5. Costimulates T-cell proliferation and cytokine production. Its cross-linking on T-cells generates a costimulatory signal which enhances the production of IL4 and IL10 in conjunction with the TCR/CD3 ligation and CD28 costimulation. Induces the activation of NF-kappa-B. Induces the activation of kinases MAPK8 and PAK2 in T-cells. Mediates B-cell proliferation in the absence of co-stimulus as well as IgE production in the presence of IL4. Involved in immunoglobulin class switching. In terms of biological role, acts as a ligand for integrins, specifically ITGA5:ITGB1 and ITGAV:ITGB3; both integrins and the CD40 receptor are required for activation of CD40-CD40LG signaling, which have cell-type dependent effects, such as B-cell activation, NF-kappa-B signaling and anti-apoptotic signaling. The protein is CD40 ligand (CD40LG) of Cercocebus atys (Sooty mangabey).